The following is a 564-amino-acid chain: Heat shock factor protein 2 (564 aa).

The DNA-binding element occupies 21 to 126 (VPAFLSKLWA…LLEHIKRKVS (106 aa)). Residues 133–206 (NKISQEDLSK…VTLVQNNQLV (74 aa)) form a hydrophobic repeat HR-A/B region. Acidic residues predominate over residues 271–280 (EENTMVDEEN). Disordered regions lie at residues 271-301 (EENTMVDEENAPITPETNEDTTSDSSNCSRS) and 320-347 (QGDKSTESVAVSANDPLSPVSDSTSPLM). Positions 390–415 (LLDYLDSIDCSLEDFQAMLSGRQFSI) are hydrophobic repeat HR-C. The segment covering 448 to 465 (TTKSNAGPAASQETQVSK) has biased composition (polar residues). The interval 448–468 (TTKSNAGPAASQETQVSKPKS) is disordered.

Belongs to the HSF family. In terms of assembly, homotrimer. In terms of tissue distribution, expressed in most tissues with the exceptions of blood and liver.

Its subcellular location is the cytoplasm. It localises to the nucleus. Its function is as follows. DNA-binding protein that specifically binds heat shock promoter elements (HSE) and activates transcription. HSF2 shows constitutive DNA binding activity, even without heat shock. In Gallus gallus (Chicken), this protein is Heat shock factor protein 2 (HSF2).